Reading from the N-terminus, the 313-residue chain is Glutathione synthetase (313 aa).

The region spanning 125-309 (KLFVMDFTEL…IAAKIWDVIE (185 aa)) is the ATP-grasp domain. 151-207 (RAEHGAVVMKPLHGHGGAAVFRVLPQDINFGSLYDMFAVTFREPWVIQRFLPEVKHG) serves as a coordination point for ATP. Mg(2+) is bound by residues glutamate 280 and asparagine 282.

Belongs to the prokaryotic GSH synthase family. Mg(2+) is required as a cofactor. Mn(2+) serves as cofactor.

The enzyme catalyses gamma-L-glutamyl-L-cysteine + glycine + ATP = glutathione + ADP + phosphate + H(+). It participates in sulfur metabolism; glutathione biosynthesis; glutathione from L-cysteine and L-glutamate: step 2/2. The chain is Glutathione synthetase from Rhodopseudomonas palustris (strain ATCC BAA-98 / CGA009).